A 581-amino-acid polypeptide reads, in one-letter code: FAD-linked oxidoreductase easE (581 aa).

The signal sequence occupies residues 1–25 (MYRLLGPLACLALAWFFTWAPSGRC). Asn44 and Asn73 each carry an N-linked (GlcNAc...) asparagine glycan. Positions 122–306 (HQGRIPLYSA…AQATIRVFPD (185 aa)) constitute an FAD-binding PCMH-type domain. The N-linked (GlcNAc...) asparagine glycan is linked to Asn369.

This sequence belongs to the oxygen-dependent FAD-linked oxidoreductase family. It depends on FAD as a cofactor.

It participates in alkaloid biosynthesis; ergot alkaloid biosynthesis. Functionally, FAD-linked oxidoreductase; part of the gene cluster that mediates the biosynthesis of fungal ergot alkaloid. DmaW catalyzes the first step of ergot alkaloid biosynthesis by condensing dimethylallyl diphosphate (DMAP) and tryptophan to form 4-dimethylallyl-L-tryptophan. The second step is catalyzed by the methyltransferase easF that methylates 4-dimethylallyl-L-tryptophan in the presence of S-adenosyl-L-methionine, resulting in the formation of 4-dimethylallyl-L-abrine. The catalase easC and the FAD-dependent oxidoreductase easE then transform 4-dimethylallyl-L-abrine to chanoclavine-I which is further oxidized by easD in the presence of NAD(+), resulting in the formation of chanoclavine-I aldehyde. Agroclavine dehydrogenase easG then mediates the conversion of chanoclavine-I aldehyde to agroclavine via a non-enzymatic adduct reaction: the substrate is an iminium intermediate that is formed spontaneously from chanoclavine-I aldehyde in the presence of glutathione. Further conversion of agroclavine to paspalic acid is a two-step process involving oxidation of agroclavine to elymoclavine and of elymoclavine to paspalic acid, the second step being performed by the elymoclavine oxidase cloA. However, cloA does not encode a functional enzyme indicating that C.fusiformis terminates its ergot alkaloid pathway at elymoclavine. The sequence is that of FAD-linked oxidoreductase easE from Claviceps fusiformis (Ergot fungus).